Reading from the N-terminus, the 180-residue chain is Translation initiation factor IF-3 (180 aa).

This sequence belongs to the IF-3 family. As to quaternary structure, monomer.

It is found in the cytoplasm. Functionally, IF-3 binds to the 30S ribosomal subunit and shifts the equilibrium between 70S ribosomes and their 50S and 30S subunits in favor of the free subunits, thus enhancing the availability of 30S subunits on which protein synthesis initiation begins. The sequence is that of Translation initiation factor IF-3 from Pasteurella multocida (strain Pm70).